A 215-amino-acid polypeptide reads, in one-letter code: Ceramide-1-phosphate transfer protein (215 aa).

5 residues coordinate an N-acylsphingoid base 1-phosphate: Asp57, Lys61, Arg107, Arg111, and His151.

It belongs to the GLTP family.

It localises to the cytoplasm. The protein localises to the cytosol. The protein resides in the golgi apparatus. Its subcellular location is the trans-Golgi network membrane. It is found in the cell membrane. It localises to the endosome membrane. The protein localises to the nucleus outer membrane. The catalysed reaction is N-(hexadecanoyl)-sphing-4-enine-1-phosphate(in) = N-(hexadecanoyl)-sphing-4-enine-1-phosphate(out). It catalyses the reaction N-(9Z-octadecenoyl)-sphing-4-enine-1-phosphate(in) = N-(9Z-octadecenoyl)-sphing-4-enine-1-phosphate(out). Mediates the intracellular transfer of ceramide-1-phosphate (C1P) between organelle membranes and the cell membrane. Required for normal structure of the Golgi stacks. Can bind phosphoceramides with a variety of aliphatic chains, but has a preference for lipids with saturated C16:0 or monounsaturated C18:1 aliphatic chains, and is inefficient with phosphoceramides containing lignoceryl (C24:0). Plays a role in the regulation of the cellular levels of ceramide-1-phosphate, and thereby contributes to the regulation of phospholipase PLA2G4A activity and the release of arachidonic acid. Has no activity with galactosylceramide, lactosylceramide, sphingomyelin, phosphatidylcholine, phosphatidic acid and ceramide. C1P transfer is stimulated by phosphatidylserine in C1P source vesicles. Regulates autophagy and pyroptosis, but not apoptosis. This Xenopus laevis (African clawed frog) protein is Ceramide-1-phosphate transfer protein (cptp).